An 89-amino-acid polypeptide reads, in one-letter code: Large ribosomal subunit protein eL34 (89 aa).

The tract at residues 1 to 22 (MPAPRYKSGSSKKVYRKAPGNS) is disordered.

Belongs to the eukaryotic ribosomal protein eL34 family.

This is Large ribosomal subunit protein eL34 from Methanococcus maripaludis (strain DSM 14266 / JCM 13030 / NBRC 101832 / S2 / LL).